Here is a 492-residue protein sequence, read N- to C-terminus: uncharacterized protein (492 aa).

13 consecutive transmembrane segments (helical) span residues 67–87 (VAIM…GGWL), 88–108 (ADRV…IMFG), 110–130 (IALA…LIIV), 157–177 (GFSI…LIVG), 185–205 (YHLG…VFAL), 232–252 (IGVI…VLTI), 255–275 (FIDL…IIMF), 294–314 (LFIG…ILAV), 333–353 (WFQS…AWLW), 367–387 (FSIG…PAMQ), 392–412 (LVSP…ELCL), 434–454 (SMWF…AGLF), and 464–484 (GTIG…SPVI).

The protein belongs to the major facilitator superfamily. Proton-dependent oligopeptide transporter (POT/PTR) (TC 2.A.17) family.

The protein resides in the cell membrane. This is an uncharacterized protein from Bacillus subtilis (strain 168).